Consider the following 591-residue polypeptide: Mono(ADP-ribosyl)transferase SpvB (591 aa).

Positions 373–576 (PMMGGNSSRP…LRLSDDATAD (204 aa)) constitute a TR mART core domain. Residues arginine 414 and 471–477 (RGLKLDK) each bind NAD(+). Active-site residues include arginine 471, serine 501, and glutamate 538. Position 538 (glutamate 538) interacts with NAD(+).

The protein belongs to the SpvB family.

It localises to the secreted. The enzyme catalyses L-arginyl-[protein] + NAD(+) = N(omega)-(ADP-D-ribosyl)-L-arginyl-[protein] + nicotinamide + H(+). Its activity is regulated as follows. Inhibited by novobiocin. In terms of biological role, mono-ADP-ribosylates eukaryotic muscle and non-muscle actin on 'Arg-177'. ADP-ribosylates all actins tested, has more activity on nonmuscle beta/gamma-actin than on muscle alpha-actin. Prefers monomeric G-actin but can weakly ADP-ribosylate F-actin. ADP-ribosylation prevents the polymerization of G-actin to F-actin, causing actin filament depolymerization, destruction of the cytoskeleton and cytotoxicity. Does not possess NAD(+)-glycohydrolase activity, unlike most mART enzymes. The polypeptide is Mono(ADP-ribosyl)transferase SpvB (spvB) (Salmonella typhimurium).